The following is a 269-amino-acid chain: Probable membrane transporter protein YfcA (269 aa).

Topologically, residues 1–7 are periplasmic; sequence METFNSL. A helical transmembrane segment spans residues 8-28; the sequence is FMVSPLLLGVLFFVAMLAGFI. The Cytoplasmic segment spans residues 29-30; the sequence is DS. The helical transmembrane segment at 31–51 threads the bilayer; it reads IAGGGGLLTIPALMAAGMSPA. The Periplasmic portion of the chain corresponds to 52–84; the sequence is NALATNKLQACGGSISATIYFIRRKVVSLSDQK. Residues 85-105 form a helical membrane-spanning segment; it reads LNIAMTFVGSMSGALLVQYVQ. At 106-111 the chain is on the cytoplasmic side; sequence ADVLRQ. The chain crosses the membrane as a helical span at residues 112 to 132; sequence ILPILVICIGLYFLLMPKLGE. Over 133 to 156 the chain is Periplasmic; it reads EDRQRRMYGLPFALIAGGCVGFYD. A helical membrane pass occupies residues 157–177; it reads GFFGPAAGSFYALAFVTLCGF. At 178–197 the chain is on the cytoplasmic side; it reads NLAKATAHAKLLNATSNIGG. The helical transmembrane segment at 198 to 218 threads the bilayer; the sequence is LLLFILGGKVIWATGFVMLVG. Over 219–269 the chain is Periplasmic; the sequence is QFLGARMGSRLVLSKGQKLIRPMIVIVSAVMSAKLLYDSHGQEILHWLGMN.

It belongs to the 4-toluene sulfonate uptake permease (TSUP) (TC 2.A.102) family.

The protein localises to the cell inner membrane. The chain is Probable membrane transporter protein YfcA (yfcA) from Escherichia coli O157:H7.